The chain runs to 232 residues: MKHDHFVVQSPDKPAQQLLLLFHGVGDNPVAMGEIGNWFAPLFPDALVVSVGGAEPSGNPAGRQWFSVQGITEDNRQARVDAIMPTFIETVRYWQKQSGVGANATALIGFSQGAIMVLESIKAEPGLASRVIAFNGRYASLPETASTATTIHLIHGGEDPVIDLAHAVAAQEALISAGGDVTLDIVEDLGHAIDNRSMQFALDHLRYTIPKHYFDEALSGGKPGDDDVIEMM.

Catalysis depends on charge relay system residues Ser111, Asp159, and His191.

The protein belongs to the AB hydrolase superfamily. AB hydrolase 2 family.

Displays esterase activity toward palmitoyl-CoA and pNP-butyrate. The sequence is that of Esterase YpfH (ypfH) from Escherichia coli (strain K12).